The chain runs to 253 residues: Imidazole glycerol phosphate synthase subunit HisF (253 aa).

Active-site residues include Asp-11 and Asp-130.

The protein belongs to the HisA/HisF family. As to quaternary structure, heterodimer of HisH and HisF.

The protein localises to the cytoplasm. It carries out the reaction 5-[(5-phospho-1-deoxy-D-ribulos-1-ylimino)methylamino]-1-(5-phospho-beta-D-ribosyl)imidazole-4-carboxamide + L-glutamine = D-erythro-1-(imidazol-4-yl)glycerol 3-phosphate + 5-amino-1-(5-phospho-beta-D-ribosyl)imidazole-4-carboxamide + L-glutamate + H(+). It participates in amino-acid biosynthesis; L-histidine biosynthesis; L-histidine from 5-phospho-alpha-D-ribose 1-diphosphate: step 5/9. Functionally, IGPS catalyzes the conversion of PRFAR and glutamine to IGP, AICAR and glutamate. The HisF subunit catalyzes the cyclization activity that produces IGP and AICAR from PRFAR using the ammonia provided by the HisH subunit. This is Imidazole glycerol phosphate synthase subunit HisF from Lysinibacillus sphaericus (strain C3-41).